The sequence spans 323 residues: Lipoyl synthase (323 aa).

Positions 61, 66, 72, 87, 91, 94, and 303 each coordinate [4Fe-4S] cluster. The 220-residue stretch at 73–292 (WTKKTATFLV…EQYGLSIGIP (220 aa)) folds into the Radical SAM core domain.

It belongs to the radical SAM superfamily. Lipoyl synthase family. The cofactor is [4Fe-4S] cluster.

The protein localises to the cytoplasm. The enzyme catalyses [[Fe-S] cluster scaffold protein carrying a second [4Fe-4S](2+) cluster] + N(6)-octanoyl-L-lysyl-[protein] + 2 oxidized [2Fe-2S]-[ferredoxin] + 2 S-adenosyl-L-methionine + 4 H(+) = [[Fe-S] cluster scaffold protein] + N(6)-[(R)-dihydrolipoyl]-L-lysyl-[protein] + 4 Fe(3+) + 2 hydrogen sulfide + 2 5'-deoxyadenosine + 2 L-methionine + 2 reduced [2Fe-2S]-[ferredoxin]. The protein operates within protein modification; protein lipoylation via endogenous pathway; protein N(6)-(lipoyl)lysine from octanoyl-[acyl-carrier-protein]: step 2/2. Functionally, catalyzes the radical-mediated insertion of two sulfur atoms into the C-6 and C-8 positions of the octanoyl moiety bound to the lipoyl domains of lipoate-dependent enzymes, thereby converting the octanoylated domains into lipoylated derivatives. This is Lipoyl synthase from Protochlamydia amoebophila (strain UWE25).